The primary structure comprises 403 residues: Casein kinase I isoform delta-A (403 aa).

The Protein kinase domain occupies 9–277; it reads YRLGRKIGSG…YLRQLFRNLF (269 aa). ATP-binding positions include 15–23 and lysine 38; that span reads IGSGSFGDI. Aspartate 128 functions as the Proton acceptor in the catalytic mechanism. The tract at residues 315-340 is autoinhibitory; sequence QGRIPLPRVMLPTSSGRPRGTQEVAP. The tract at residues 322–403 is disordered; sequence RVMLPTSSGR…PSGLQSAVPR (82 aa).

The protein belongs to the protein kinase superfamily. As to quaternary structure, monomer. Interacts with per1 and per2. Component of the circadian core oscillator. In terms of processing, autophosphorylated on serine and threonine residues.

Its subcellular location is the cytoplasm. It is found in the nucleus. The catalysed reaction is L-seryl-[protein] + ATP = O-phospho-L-seryl-[protein] + ADP + H(+). It carries out the reaction L-threonyl-[protein] + ATP = O-phospho-L-threonyl-[protein] + ADP + H(+). Exhibits substrate-dependent heparin activation. In terms of biological role, casein kinases are operationally defined by their preferential utilization of acidic proteins such as caseins as substrates. Central component of the circadian clock. May act as a negative regulator of circadian rhythmicity by phosphorylating per1 and per2, which may lead to their degradation. Participates in wnt signaling. The protein is Casein kinase I isoform delta-A (csnk1da) of Danio rerio (Zebrafish).